We begin with the raw amino-acid sequence, 261 residues long: [LysW]-aminoadipate/[LysW]-glutamate kinase (261 aa).

Substrate-binding positions include 35 to 36 (GG), Arg62, and Asn166.

This sequence belongs to the acetylglutamate kinase family. LysZ subfamily.

Its subcellular location is the cytoplasm. The catalysed reaction is [amino-group carrier protein]-C-terminal-N-(1,4-dicarboxybutan-1-yl)-L-glutamine + ATP = [amino-group carrier protein]-C-terminal-N-(1-carboxy-5-phosphooxy-5-oxopentan-1-yl)-L-glutamine + ADP. It carries out the reaction [amino-group carrier protein]-C-terminal-gamma-(L-glutamyl)-L-glutamate + ATP = [amino-group carrier protein]-C-terminal-gamma-(5-phospho-L-glutamyl)-L-glutamate + ADP. The protein operates within amino-acid biosynthesis; L-lysine biosynthesis via AAA pathway; L-lysine from L-alpha-aminoadipate (Thermus route): step 2/5. It functions in the pathway amino-acid biosynthesis; L-arginine biosynthesis. In terms of biological role, involved in both the arginine and lysine biosynthetic pathways. Phosphorylates the LysW-bound precursors glutamate (for arginine biosynthesis), respectively alpha-aminoadipate (for lysine biosynthesis). The sequence is that of [LysW]-aminoadipate/[LysW]-glutamate kinase from Sulfurisphaera tokodaii (strain DSM 16993 / JCM 10545 / NBRC 100140 / 7) (Sulfolobus tokodaii).